Here is a 967-residue protein sequence, read N- to C-terminus: Aminopeptidase N (967 aa).

The Cytoplasmic portion of the chain corresponds to 1–8; the sequence is MAKGFYIS. A helical; Signal-anchor for type II membrane protein membrane pass occupies residues 9 to 32; that stretch reads KPVGILAILLGVAAVCTIIALSVV. A cytosolic Ser/Thr-rich junction region spans residues 33 to 66; sequence YSQEKNRSTESSTAASTAAPTGPTTTVATTLDQS. Residues 33-967 are Extracellular-facing; sequence YSQEKNRSTE…VVLRWFTENS (935 aa). Asparagine 38 carries an N-linked (GlcNAc...) asparagine glycan. The interval 41 to 61 is disordered; sequence TESSTAASTAAPTGPTTTVAT. The segment at 67–967 is metalloprotease; sequence KPWNVYRLPK…VVLRWFTENS (901 aa). 2 N-linked (GlcNAc...) asparagine glycosylation sites follow: asparagine 84 and asparagine 126. Position 175 is a sulfotyrosine (tyrosine 175). Asparagine 233 and asparagine 338 each carry an N-linked (GlcNAc...) asparagine glycan. 351-355 contributes to the substrate binding site; it reads GAMEN. Histidine 387 contributes to the Zn(2+) binding site. The active-site Proton acceptor is the glutamate 388. Zn(2+)-binding residues include histidine 391 and glutamate 410. A Sulfotyrosine modification is found at tyrosine 418. Residues asparagine 626, asparagine 682, and asparagine 740 are each glycosylated (N-linked (GlcNAc...) asparagine). Residues 670–840 are interaction with FCoV and TGEV spike glycoprotein; that stretch reads ASAQKVPVTL…GALACSNQVW (171 aa). Cystine bridges form between cysteine 762–cysteine 769 and cysteine 799–cysteine 835.

It belongs to the peptidase M1 family. Homodimer. Interacts with SLC6A19. As to quaternary structure, (Microbial infection) Interacts with FCoV, CCoV, TGEV and HCoV-229E spike glycoprotein. The cofactor is Zn(2+). Sulfated. Post-translationally, N- and O-glycosylated. In terms of processing, may undergo proteolysis and give rise to a soluble form.

It localises to the cell membrane. It catalyses the reaction Release of an N-terminal amino acid, Xaa-|-Yaa- from a peptide, amide or arylamide. Xaa is preferably Ala, but may be most amino acids including Pro (slow action). When a terminal hydrophobic residue is followed by a prolyl residue, the two may be released as an intact Xaa-Pro dipeptide.. Its function is as follows. Broad specificity aminopeptidase which plays a role in the final digestion of peptides generated from hydrolysis of proteins by gastric and pancreatic proteases. Also involved in the processing of various peptides including peptide hormones, such as angiotensin III and IV, neuropeptides, and chemokines. May also be involved the cleavage of peptides bound to major histocompatibility complex class II molecules of antigen presenting cells. May have a role in angiogenesis and promote cholesterol crystallization. May have a role in amino acid transport by acting as binding partner of amino acid transporter SLC6A19 and regulating its activity. Functionally, (Microbial infection) In case of feline coronavirus (FCoV) infection, serves as a receptor for FCoV spike glycoprotein. It is as well a receptor for other serogroup I coronaviruses, like canine coronavirus (CCoV), porcine transmissible gastroenteritis virus (TGEV), and human coronavirus 229E (HCoV-229E). Also serves as a receptor for infectious bronchitis virus (IBV, Arkansas 99 serotype) in serogroup III. This chain is Aminopeptidase N (ANPEP), found in Felis catus (Cat).